The following is a 118-amino-acid chain: Large ribosomal subunit protein eL22 (118 aa).

This sequence belongs to the eukaryotic ribosomal protein eL22 family.

This Tetrahymena thermophila (strain SB210) protein is Large ribosomal subunit protein eL22 (RPL22).